The following is a 252-amino-acid chain: Small ribosomal subunit protein uS2 (252 aa).

N-acetylserine is present on Ser-2. The segment covering 213-222 has biased composition (low complexity); it reads QVAEETAGAA. A disordered region spans residues 213–252; it reads QVAEETAGAATEEEEAKEEVTEEQTEATEWAEETTEAVAW. Acidic residues predominate over residues 223-252; sequence TEEEEAKEEVTEEQTEATEWAEETTEAVAW.

This sequence belongs to the universal ribosomal protein uS2 family. As to quaternary structure, component of the small ribosomal subunit. Mature ribosomes consist of a small (40S) and a large (60S) subunit. The 40S subunit contains about 33 different proteins and 1 molecule of RNA (18S). The 60S subunit contains about 49 different proteins and 3 molecules of RNA (25S, 5.8S and 5S). Interacts with RPS21.

Its subcellular location is the cytoplasm. Required for the assembly and/or stability of the 40S ribosomal subunit. Required for the processing of the 20S rRNA-precursor to mature 18S rRNA in a late step of the maturation of 40S ribosomal subunits. This is Small ribosomal subunit protein uS2 from Zygosaccharomyces rouxii (strain ATCC 2623 / CBS 732 / NBRC 1130 / NCYC 568 / NRRL Y-229).